Reading from the N-terminus, the 439-residue chain is Sex-determination protein fem-3 (439 aa).

Residues 21–45 are disordered; that stretch reads RRLKRKANDDDDDDETVRERVDDAE.

In terms of assembly, component of a complex containing fem-1, fem-2 and fem-3. Interacts with fem-1 and fem-2 (via N-terminus). Part of a E3 ubiquitin-protein ligase complex, at least composed of cul-2, elc-1, tra-1, fem-1, fem-2 and fem-3; mediates the ubiquitination and subsequent proteasomal degradation of tra-1. Interacts with tra-1. Interacts with sel-10. Interacts with tra-2.

Required for male development. In XO (male) animals, fem-3 directs male differentiation in all tissues. In XX (hermaphrodite) animals, it specifies the first 80 or so germ cells to be sperm. Negatively regulates male development when bound to tra-2. Together with fem-2 associates with the CBC(fem-1) E3 ubiquitin-protein ligase complex which mediates the ubiquitination and subsequent proteasomal degradation of tra-1. This chain is Sex-determination protein fem-3, found in Caenorhabditis remanei (Caenorhabditis vulgaris).